A 215-amino-acid chain; its full sequence is 2-phospho-L-lactate guanylyltransferase (215 aa).

Belongs to the CofC family. As to quaternary structure, homodimer.

It carries out the reaction (2S)-2-phospholactate + GTP + H(+) = (2S)-lactyl-2-diphospho-5'-guanosine + diphosphate. The protein operates within cofactor biosynthesis; coenzyme F420 biosynthesis. Its function is as follows. Guanylyltransferase that catalyzes the activation of (2S)-2-phospholactate (2-PL) as (2S)-lactyl-2-diphospho-5'-guanosine, via the condensation of 2-PL with GTP. It is involved in the biosynthesis of coenzyme F420, a hydride carrier cofactor. The sequence is that of 2-phospho-L-lactate guanylyltransferase from Methanococcoides burtonii (strain DSM 6242 / NBRC 107633 / OCM 468 / ACE-M).